The following is a 244-amino-acid chain: Protein TIFY 10b (244 aa).

A Tify domain is found at 97–132 (QEPEKRQLTIFYGGKVLVFNDFPADKAKGLMQLASK). A Jas motif is present at residues 185–210 (PIARKASLHRFLEKRKDRLNAKTPYQ). The short motif at 187-194 (ARKASLHR) is the Nuclear localization signal element. The segment at 193–244 (HRFLEKRKDRLNAKTPYQASPSDATPVKKEPESQPWLGLGPNAVVKPIERGQ) is disordered. Basic and acidic residues predominate over residues 194 to 204 (RFLEKRKDRLN).

It belongs to the TIFY/JAZ family. Ubiquitinated. Targeted for degradation by the SCF(COI1) E3 ubiquitin ligase-proteasome pathway during jasmonate signaling.

Its subcellular location is the nucleus. In terms of biological role, repressor of jasmonate responses. The sequence is that of Protein TIFY 10b from Oryza sativa subsp. indica (Rice).